Reading from the N-terminus, the 209-residue chain is Mitochondrial import inner membrane translocase subunit Tim23 (209 aa).

3 consecutive transmembrane segments (helical) span residues 73 to 93 (FELAFFTIGGCCISGAAFGAL), 125 to 145 (ALWANTLGSLALLYSAFGVIV), and 180 to 200 (GGLAGLALASTFALYNNWEHI).

The protein belongs to the Tim17/Tim22/Tim23 family. In terms of assembly, component of the TIM23 complex at least composed of timm23, timm17 and timm50. The complex interacts with the timm44 component of the PAM complex.

It is found in the mitochondrion inner membrane. Essential component of the TIM23 complex, a complex that mediates the translocation of transit peptide-containing proteins across the mitochondrial inner membrane. The chain is Mitochondrial import inner membrane translocase subunit Tim23 (timm23) from Xenopus laevis (African clawed frog).